Here is a 268-residue protein sequence, read N- to C-terminus: MVNTETYTERASKHPSKVAQRLFQLMESKKTNLCASIDVPTTKEFLSLIDKLGPFICLVKTHIDIISDFSYEGTILPLIELSKKHNFMIFEDRKFADIGNTVKLQYTSGVYKISSWSDITNAHGVTGKGGVEGLKKGADETTNEPRGLLMLAELSSKGSLAYGEYTNKTIEIAKSDKEFVIGFIAQRDMGGHDQGFDWIIMTPGVGLDDKGDALGQQYRTVDEVISTGTDVIIVGRGLFGKGRDPEVEGKRYREAGWNAYLKKNGQLE.

Residues Asp-38, 60–62 (KTH), 92–101 (DRKFADIGNT), Tyr-218, and Arg-236 contribute to the substrate site. Lys-94 functions as the Proton donor in the catalytic mechanism.

The protein belongs to the OMP decarboxylase family.

The enzyme catalyses orotidine 5'-phosphate + H(+) = UMP + CO2. The protein operates within pyrimidine metabolism; UMP biosynthesis via de novo pathway; UMP from orotate: step 2/2. In Candida tropicalis (Yeast), this protein is Orotidine 5'-phosphate decarboxylase (URA3).